The chain runs to 184 residues: ATP synthase subunit b, chloroplastic (184 aa).

A helical transmembrane segment spans residues L27–L49.

Belongs to the ATPase B chain family. F-type ATPases have 2 components, F(1) - the catalytic core - and F(0) - the membrane proton channel. F(1) has five subunits: alpha(3), beta(3), gamma(1), delta(1), epsilon(1). F(0) has four main subunits: a(1), b(1), b'(1) and c(10-14). The alpha and beta chains form an alternating ring which encloses part of the gamma chain. F(1) is attached to F(0) by a central stalk formed by the gamma and epsilon chains, while a peripheral stalk is formed by the delta, b and b' chains.

It localises to the plastid. It is found in the chloroplast thylakoid membrane. Functionally, f(1)F(0) ATP synthase produces ATP from ADP in the presence of a proton or sodium gradient. F-type ATPases consist of two structural domains, F(1) containing the extramembraneous catalytic core and F(0) containing the membrane proton channel, linked together by a central stalk and a peripheral stalk. During catalysis, ATP synthesis in the catalytic domain of F(1) is coupled via a rotary mechanism of the central stalk subunits to proton translocation. Component of the F(0) channel, it forms part of the peripheral stalk, linking F(1) to F(0). The chain is ATP synthase subunit b, chloroplastic from Oenothera elata subsp. hookeri (Hooker's evening primrose).